The sequence spans 449 residues: MLNYTGLENKNVLVVGLAKSGYEAAKLLSKLGANVTVNDGKDLSQDAHAKDLESMGISVVSGSHPLTLLDKNPIIVKNPGIPYTVSIIDEAVKRGLKILTEVELSYLISEAPIIAVTGTNGKTTVTSLIGDMFKKSRLTGRLSGNIGYVASKVAQEVKPTDYLVTELSSFQLLGIEKYKPHIAIITNIYSAHLDYHENLENYQNAKKQIYKNQTEEDYLICNYHQRQVIESEELKAKTLYFSTQQEVDGIYIKDGFIVYKGVRIINTEDLVLPGEHNLENILAAVLACILAGVPIKAIIDSLTTFSGIEHRLQYVGTNRTNKYYNDSKATNTLATQFALNSFNQPIIWLCGGLDRGNEFDELIPYMENVRAMVVFGQTKAKFAKLGNSQGKSVIEANNVEDAVDKVQDIIEPNDVVLLSPACASWDQYSTFEERGEKFIERFRAHLPSY.

118 to 124 (GTNGKTT) lines the ATP pocket.

Belongs to the MurCDEF family.

The protein resides in the cytoplasm. It carries out the reaction UDP-N-acetyl-alpha-D-muramoyl-L-alanine + D-glutamate + ATP = UDP-N-acetyl-alpha-D-muramoyl-L-alanyl-D-glutamate + ADP + phosphate + H(+). Its pathway is cell wall biogenesis; peptidoglycan biosynthesis. Functionally, cell wall formation. Catalyzes the addition of glutamate to the nucleotide precursor UDP-N-acetylmuramoyl-L-alanine (UMA). In Staphylococcus aureus (strain MRSA252), this protein is UDP-N-acetylmuramoylalanine--D-glutamate ligase.